We begin with the raw amino-acid sequence, 115 residues long: Histone H2A-Bbd type 1 (115 aa).

Positions 1–21 (MPRRRRRRGSSGAGGRGRTCS) are disordered. The docking domain stretch occupies residues 87–115 (LLDMVVHNDRLLSTLFNTTTISQVAPGED).

It belongs to the histone H2A family. The nucleosome is a histone octamer containing two molecules each of H2A, H2B, H3 and H4 assembled in one H3-H4 heterotetramer and two H2A-H2B heterodimers. May be incorporated into a proportion of nucleosomes, replacing one or more H2A molecules. As to expression, present in mature sperm.

The protein resides in the nucleus. Its subcellular location is the chromosome. Functionally, atypical histone H2A which can replace conventional H2A in some nucleosomes and is associated with active transcription and mRNA processing. Nucleosomes wrap and compact DNA into chromatin, limiting DNA accessibility to the cellular machineries which require DNA as a template. Histones thereby play a central role in transcription regulation, DNA repair, DNA replication and chromosomal stability. Nucleosomes containing this histone are less rigid and organize less DNA than canonical nucleosomes in vivo. They are enriched in actively transcribed genes and associate with the elongating form of RNA polymerase. They associate with spliceosome components and are required for mRNA splicing. The protein is Histone H2A-Bbd type 1 of Homo sapiens (Human).